The chain runs to 652 residues: Spermatogenesis-associated protein 13 (652 aa).

The interval methionine 1–proline 24 is disordered. Serine 78 is modified (phosphoserine). Positions isoleucine 81–leucine 108 are disordered. The ABR (APC-binding region) domain stretch occupies residues serine 98 to valine 150. Serine 114 is modified (phosphoserine). The SH3 domain occupies glycine 147 to asparagine 206. Residues glutamate 209–glutamate 235 are disordered. In terms of domain architecture, DH spans methionine 240–arginine 424. Positions glutamate 455–arginine 561 constitute a PH domain. Residues arginine 561–lysine 652 are C-terminal tail.

In terms of assembly, interacts (via ABR and SH3 domain) with APC. The binding of APC enhances its GEF activity by relieving it from an autoinhibitory conformation, in which the ABR and SH3 domains are associated with the C-terminal tail. Interacts (via C-terminal tail) with PPP1R9B (via C-terminus). Interacts with RAC1. Expressed at high levels in the placenta, spleen and kidney, at moderate levels in lung, small intestine, liver, brain and heart, and at low levels in skeletal muscle. Expression is aberrantly enhanced in most colorectal tumors.

The protein resides in the cytoplasm. Its subcellular location is the cell projection. It localises to the filopodium. It is found in the lamellipodium. The protein localises to the ruffle membrane. The protein resides in the podosome. Both the ABR and the SH3 domains contribute to maintaining the protein in an inhibited conformation by associating with the C-terminal tail. Binding of these domains to the C-terminal tail inhibits the activity of the protein by blocking a region that is required for its GEF activity. In terms of biological role, acts as a guanine nucleotide exchange factor (GEF) for RHOA, RAC1 and CDC42 GTPases. Regulates cell migration and adhesion assembly and disassembly through a RAC1, PI3K, RHOA and AKT1-dependent mechanism. Increases both RAC1 and CDC42 activity, but decreases the amount of active RHOA. Required for MMP9 up-regulation via the JNK signaling pathway in colorectal tumor cells. Involved in tumor angiogenesis and may play a role in intestinal adenoma formation and tumor progression. This is Spermatogenesis-associated protein 13 from Homo sapiens (Human).